A 405-amino-acid polypeptide reads, in one-letter code: MPEPVAEPALNGLRLNLRIVSIVMFNFASYLTIGLPLAVLPGYVHDVMGFSAFWAGLVISLQYFATLLSRPHAGRYADLLGPKKIVVFGLCGCFLSGLGYLTAGLTASLPVISLLLLCLGRVILGIGQSFAGTGSTLWGVGVVGSLHIGRVISWNGIVTYGAMAMGAPLGVVFYHWGGLQALALIIMGVALVAILLAIPRPTVKASKGKPLPFRAVLGRVWLYGMALALASAGFGVIATFITLFYDAKGWDGAAFALTLFSCAFVGTRLLFPNGINRIGGLNVAMICFSVEIIGLLLVGVATMPWMAKIGVLLAGAGFSLVFPALGVVAVKAVPQQNQGAALATYTVFMDLSLGVTGPLAGLVMSWAGVPVIYLAAAGLVAIALLLTWRLKKRPPVEIPEAASSS.

Helical transmembrane passes span 19 to 39, 47 to 67, 85 to 105, 107 to 127, 156 to 176, 178 to 198, 224 to 244, 252 to 272, 283 to 303, 309 to 329, 344 to 364, and 366 to 386; these read IVSIVMFNFASYLTIGLPLAV, VMGFSAFWAGLVISLQYFATL, IVVFGLCGCFLSGLGYLTAGL, ASLPVISLLLLCLGRVILGIG, GIVTYGAMAMGAPLGVVFYHW, GLQALALIIMGVALVAILLAI, GMALALASAGFGVIATFITLF, GAAFALTLFSCAFVGTRLLFP, VAMICFSVEIIGLLLVGVATM, IGVLLAGAGFSLVFPALGVVA, TYTVFMDLSLGVTGPLAGLVM, and WAGVPVIYLAAAGLVAIALLL.

This sequence belongs to the major facilitator superfamily. YhhS family.

The protein resides in the cell inner membrane. This is an uncharacterized protein from Escherichia coli O6:H1 (strain CFT073 / ATCC 700928 / UPEC).